Consider the following 365-residue polypeptide: MRKTAVVAAGGTGGHLFPAQALAEALIARGWRIVLASDERVAGLAQDFPAERRIGLSAATYRPGDPVGMMRAGFAVLRGAMHARAAFREIGPDVVVGFGGYPSAPALVAAILDRRPTVIHEQNAVMGRTNRILAPHVRTVACAFPTLKKAPPKVAGRAVVVGNPVRPPIRALADVPYVPPEPNGPVRLLVTGGSQGARLLSELVPEAVKALPEDLRRRLTVHQQTRPESMNTARRAYRDALVDAEIAPFFRDIAGRLREAHLVVGRAGAGTVCEFAIAGKPSILVPLAIALDDDQGQNARLLADAGGAEVARENQLTVDTMANALEKLLTNPARLQRMAEAARSVAIPDAAERLADVVEQTARGR.

Residues 12–14 (TGG), N123, R166, S194, and Q295 each bind UDP-N-acetyl-alpha-D-glucosamine.

This sequence belongs to the glycosyltransferase 28 family. MurG subfamily.

The protein resides in the cell inner membrane. It catalyses the reaction di-trans,octa-cis-undecaprenyl diphospho-N-acetyl-alpha-D-muramoyl-L-alanyl-D-glutamyl-meso-2,6-diaminopimeloyl-D-alanyl-D-alanine + UDP-N-acetyl-alpha-D-glucosamine = di-trans,octa-cis-undecaprenyl diphospho-[N-acetyl-alpha-D-glucosaminyl-(1-&gt;4)]-N-acetyl-alpha-D-muramoyl-L-alanyl-D-glutamyl-meso-2,6-diaminopimeloyl-D-alanyl-D-alanine + UDP + H(+). The protein operates within cell wall biogenesis; peptidoglycan biosynthesis. In terms of biological role, cell wall formation. Catalyzes the transfer of a GlcNAc subunit on undecaprenyl-pyrophosphoryl-MurNAc-pentapeptide (lipid intermediate I) to form undecaprenyl-pyrophosphoryl-MurNAc-(pentapeptide)GlcNAc (lipid intermediate II). In Phenylobacterium zucineum (strain HLK1), this protein is UDP-N-acetylglucosamine--N-acetylmuramyl-(pentapeptide) pyrophosphoryl-undecaprenol N-acetylglucosamine transferase.